The following is a 1432-amino-acid chain: Gag-Pol polyprotein (1432 aa).

The N-myristoyl glycine; by host moiety is linked to residue G2. The interval 7–31 (ILSGGKLDDWEKIRLRPGGKKKYRI) is interaction with Gp41. Positions 8 to 43 (LSGGKLDDWEKIRLRPGGKKKYRIKHLVWASRELDR) are interaction with host CALM1. Positions 12-19 (KLDDWEKI) are interaction with host AP3D1. The segment at 14–33 (DDWEKIRLRPGGKKKYRIKH) is interaction with membrane phosphatidylinositol 4,5-bisphosphate and RNA. Positions 16–22 (WEKIRLR) match the Nuclear export signal motif. The short motif at 26 to 32 (KKKYRIK) is the Nuclear localization signal element. The segment at 73-77 (QEIKS) is interaction with membrane phosphatidylinositol 4,5-bisphosphate. Y132 carries the phosphotyrosine; by host modification. The tract at residues 189–227 (NTIGGHQAAMQMLKDTINEEAAEWDRVHPVHAGPIAPGQ) is interaction with human PPIA/CYPA and NUP153. Residues 277–363 (YSPVSILDIR…GGPGHKARVL (87 aa)) form a dimerization/Multimerization of capsid protein p24 region. 2 consecutive CCHC-type zinc fingers follow at residues 389–406 (VKCF…NCRA) and 410–427 (KGCW…DCTE). Residues 443-483 (EARELSPEQTRANSPTSREPRARRGDPLPETGAEGQGTVSS) form a disordered region. Polar residues predominate over residues 449–459 (PEQTRANSPTS). Over residues 460–469 (REPRARRGDP) the composition is skewed to basic and acidic residues. Residues 486–490 (PQITL) are dimerization of protease. The 70-residue stretch at 505–574 (REALLDTGAD…TPVNIIGRNM (70 aa)) folds into the Peptidase A2 domain. D510 functions as the For protease activity; shared with dimeric partner in the catalytic mechanism. 2 dimerization of protease regions span residues 534 to 540 (GIGGFIK) and 573 to 585 (NMLT…LNFP). Residues 628–818 (EGKISRVGPE…PPFLWMGYEL (191 aa)) enclose the Reverse transcriptase domain. Mg(2+) is bound by residues D694, D769, and D770. Residues 811–819 (FLWMGYELH) form an RT 'primer grip' region. The Tryptophan repeat motif motif lies at 982-998 (WETWWTDYWQATWIPEW). Positions 1018 to 1141 (IMGAETFYVD…VDKLVSSGIR (124 aa)) constitute an RNase H type-1 domain. Positions 1027, 1062, 1082, and 1133 each coordinate Mg(2+). The segment at 1147–1188 (DGIDKAQEDHEKYHSNWRAMASDFNLPPVVAKEIVASCDKCQ) adopts an Integrase-type zinc-finger fold. Zn(2+)-binding residues include H1156, H1160, C1184, and C1187. Residues 1198–1348 (VDCSPGIWQL…SAGERIIDII (151 aa)) form the Integrase catalytic domain. Mg(2+)-binding residues include D1208, D1260, and E1296. Residues 1367-1414 (FRVYYRDSRDPIWKGPAKLPWKGEGAVVIQDNSEIKVVPRRKAKIIRD) constitute a DNA-binding region (integrase-type).

In terms of assembly, homotrimer; further assembles as hexamers of trimers. Interacts with gp41 (via C-terminus). Interacts with host CALM1; this interaction induces a conformational change in the Matrix protein, triggering exposure of the myristate group. Interacts with host AP3D1; this interaction allows the polyprotein trafficking to multivesicular bodies during virus assembly. Part of the pre-integration complex (PIC) which is composed of viral genome, matrix protein, Vpr and integrase. As to quaternary structure, homodimer; the homodimer further multimerizes as homohexamers or homopentamers. Interacts with human PPIA/CYPA; This interaction stabilizes the capsid. Interacts with human NUP153. Interacts with host PDZD8; this interaction stabilizes the capsid. Interacts with monkey TRIM5; this interaction destabilizes the capsid. Homodimer, whose active site consists of two apposed aspartic acid residues. In terms of assembly, heterodimer of p66 RT and p51 RT (RT p66/p51). Heterodimerization of RT is essential for DNA polymerase activity. The overall folding of the subdomains is similar in p66 RT and p51 RT but the spatial arrangements of the subdomains are dramatically different. As to quaternary structure, homotetramer; may further associate as a homohexadecamer. Part of the pre-integration complex (PIC) which is composed of viral genome, matrix protein, Vpr and integrase. Interacts with human SMARCB1/INI1 and human PSIP1/LEDGF isoform 1. Interacts with human KPNA3; this interaction might play a role in nuclear import of the pre-integration complex. Interacts with human NUP153; this interaction might play a role in nuclear import of the pre-integration complex. Requires Mg(2+) as cofactor. In terms of processing, specific enzymatic cleavages by the viral protease yield mature proteins. The protease is released by autocatalytic cleavage. The polyprotein is cleaved during and after budding, this process is termed maturation. Proteolytic cleavage of p66 RT removes the RNase H domain to yield the p51 RT subunit. Nucleocapsid protein p7 might be further cleaved after virus entry. Tyrosine phosphorylated presumably in the virion by a host kinase. Phosphorylation is apparently not a major regulator of membrane association. Post-translationally, phosphorylated possibly by host MAPK1; this phosphorylation is necessary for Pin1-mediated virion uncoating. In terms of processing, methylated by host PRMT6, impairing its function by reducing RNA annealing and the initiation of reverse transcription.

It is found in the host cell membrane. Its subcellular location is the host endosome. The protein localises to the host multivesicular body. The protein resides in the virion membrane. It localises to the host nucleus. It is found in the host cytoplasm. Its subcellular location is the virion. It catalyses the reaction Specific for a P1 residue that is hydrophobic, and P1' variable, but often Pro.. The enzyme catalyses Endohydrolysis of RNA in RNA/DNA hybrids. Three different cleavage modes: 1. sequence-specific internal cleavage of RNA. Human immunodeficiency virus type 1 and Moloney murine leukemia virus enzymes prefer to cleave the RNA strand one nucleotide away from the RNA-DNA junction. 2. RNA 5'-end directed cleavage 13-19 nucleotides from the RNA end. 3. DNA 3'-end directed cleavage 15-20 nucleotides away from the primer terminus.. It carries out the reaction 3'-end directed exonucleolytic cleavage of viral RNA-DNA hybrid.. The catalysed reaction is DNA(n) + a 2'-deoxyribonucleoside 5'-triphosphate = DNA(n+1) + diphosphate. Protease: The viral protease is inhibited by many synthetic protease inhibitors (PIs), such as amprenavir, atazanavir, indinavir, loprinavir, nelfinavir, ritonavir and saquinavir. Use of protease inhibitors in tritherapy regimens permit more ambitious therapeutic strategies. Reverse transcriptase/ribonuclease H: RT can be inhibited either by nucleoside RT inhibitors (NRTIs) or by non nucleoside RT inhibitors (NNRTIs). NRTIs act as chain terminators, whereas NNRTIs inhibit DNA polymerization by binding a small hydrophobic pocket near the RT active site and inducing an allosteric change in this region. Classical NRTIs are abacavir, adefovir (PMEA), didanosine (ddI), lamivudine (3TC), stavudine (d4T), tenofovir (PMPA), zalcitabine (ddC), and zidovudine (AZT). Classical NNRTIs are atevirdine (BHAP U-87201E), delavirdine, efavirenz (DMP-266), emivirine (I-EBU), and nevirapine (BI-RG-587). The tritherapies used as a basic effective treatment of AIDS associate two NRTIs and one NNRTI. In terms of biological role, mediates, with Gag polyprotein, the essential events in virion assembly, including binding the plasma membrane, making the protein-protein interactions necessary to create spherical particles, recruiting the viral Env proteins, and packaging the genomic RNA via direct interactions with the RNA packaging sequence (Psi). Gag-Pol polyprotein may regulate its own translation, by the binding genomic RNA in the 5'-UTR. At low concentration, the polyprotein would promote translation, whereas at high concentration, the polyprotein would encapsidate genomic RNA and then shut off translation. Functionally, targets the polyprotein to the plasma membrane via a multipartite membrane-binding signal, that includes its myristoylated N-terminus. Matrix protein is part of the pre-integration complex. Implicated in the release from host cell mediated by Vpu. Binds to RNA. Its function is as follows. Forms the conical core that encapsulates the genomic RNA-nucleocapsid complex in the virion. Most core are conical, with only 7% tubular. The core is constituted by capsid protein hexamer subunits. The core is disassembled soon after virion entry. Host restriction factors such as TRIM5-alpha or TRIMCyp bind retroviral capsids and cause premature capsid disassembly, leading to blocks in reverse transcription. Capsid restriction by TRIM5 is one of the factors which restricts HIV-1 to the human species. Host PIN1 apparently facilitates the virion uncoating. On the other hand, interactions with PDZD8 or CYPA stabilize the capsid. Encapsulates and protects viral dimeric unspliced genomic RNA (gRNA). Binds these RNAs through its zinc fingers. Acts as a nucleic acid chaperone which is involved in rearangement of nucleic acid secondary structure during gRNA retrotranscription. Also facilitates template switch leading to recombination. As part of the polyprotein, participates in gRNA dimerization, packaging, tRNA incorporation and virion assembly. In terms of biological role, aspartyl protease that mediates proteolytic cleavages of Gag and Gag-Pol polyproteins during or shortly after the release of the virion from the plasma membrane. Cleavages take place as an ordered, step-wise cascade to yield mature proteins. This process is called maturation. Displays maximal activity during the budding process just prior to particle release from the cell. Also cleaves Nef and Vif, probably concomitantly with viral structural proteins on maturation of virus particles. Hydrolyzes host EIF4GI and PABP1 in order to shut off the capped cellular mRNA translation. The resulting inhibition of cellular protein synthesis serves to ensure maximal viral gene expression and to evade host immune response. Also mediates cleavage of host YTHDF3. Mediates cleavage of host CARD8, thereby activating the CARD8 inflammasome, leading to the clearance of latent HIV-1 in patient CD4(+) T-cells after viral reactivation; in contrast, HIV-1 can evade CARD8-sensing when its protease remains inactive in infected cells prior to viral budding. Functionally, multifunctional enzyme that converts the viral RNA genome into dsDNA in the cytoplasm, shortly after virus entry into the cell. This enzyme displays a DNA polymerase activity that can copy either DNA or RNA templates, and a ribonuclease H (RNase H) activity that cleaves the RNA strand of RNA-DNA heteroduplexes in a partially processive 3' to 5' endonucleasic mode. Conversion of viral genomic RNA into dsDNA requires many steps. A tRNA(3)-Lys binds to the primer-binding site (PBS) situated at the 5'-end of the viral RNA. RT uses the 3' end of the tRNA primer to perform a short round of RNA-dependent minus-strand DNA synthesis. The reading proceeds through the U5 region and ends after the repeated (R) region which is present at both ends of viral RNA. The portion of the RNA-DNA heteroduplex is digested by the RNase H, resulting in a ssDNA product attached to the tRNA primer. This ssDNA/tRNA hybridizes with the identical R region situated at the 3' end of viral RNA. This template exchange, known as minus-strand DNA strong stop transfer, can be either intra- or intermolecular. RT uses the 3' end of this newly synthesized short ssDNA to perform the RNA-dependent minus-strand DNA synthesis of the whole template. RNase H digests the RNA template except for two polypurine tracts (PPTs) situated at the 5'-end and near the center of the genome. It is not clear if both polymerase and RNase H activities are simultaneous. RNase H probably can proceed both in a polymerase-dependent (RNA cut into small fragments by the same RT performing DNA synthesis) and a polymerase-independent mode (cleavage of remaining RNA fragments by free RTs). Secondly, RT performs DNA-directed plus-strand DNA synthesis using the PPTs that have not been removed by RNase H as primers. PPTs and tRNA primers are then removed by RNase H. The 3' and 5' ssDNA PBS regions hybridize to form a circular dsDNA intermediate. Strand displacement synthesis by RT to the PBS and PPT ends produces a blunt ended, linear dsDNA copy of the viral genome that includes long terminal repeats (LTRs) at both ends. Its function is as follows. Catalyzes viral DNA integration into the host chromosome, by performing a series of DNA cutting and joining reactions. This enzyme activity takes place after virion entry into a cell and reverse transcription of the RNA genome in dsDNA. The first step in the integration process is 3' processing. This step requires a complex comprising the viral genome, matrix protein, Vpr and integrase. This complex is called the pre-integration complex (PIC). The integrase protein removes 2 nucleotides from each 3' end of the viral DNA, leaving recessed CA OH's at the 3' ends. In the second step, the PIC enters cell nucleus. This process is mediated through integrase and Vpr proteins, and allows the virus to infect a non dividing cell. This ability to enter the nucleus is specific of lentiviruses, other retroviruses cannot and rely on cell division to access cell chromosomes. In the third step, termed strand transfer, the integrase protein joins the previously processed 3' ends to the 5' ends of strands of target cellular DNA at the site of integration. The 5'-ends are produced by integrase-catalyzed staggered cuts, 5 bp apart. A Y-shaped, gapped, recombination intermediate results, with the 5'-ends of the viral DNA strands and the 3' ends of target DNA strands remaining unjoined, flanking a gap of 5 bp. The last step is viral DNA integration into host chromosome. This involves host DNA repair synthesis in which the 5 bp gaps between the unjoined strands are filled in and then ligated. Since this process occurs at both cuts flanking the HIV genome, a 5 bp duplication of host DNA is produced at the ends of HIV-1 integration. Alternatively, Integrase may catalyze the excision of viral DNA just after strand transfer, this is termed disintegration. This chain is Gag-Pol polyprotein (gag-pol), found in Human immunodeficiency virus type 1 group M subtype J (isolate SE9280) (HIV-1).